The sequence spans 221 residues: Mediator of RNA polymerase II transcription subunit 19a (221 aa).

The disordered stretch occupies residues 101–221; that stretch reads PVELPPAEKG…DEVGAIRVAG (121 aa). Positions 142 to 152 are enriched in basic residues; the sequence is EHKKHKHKHKD. The span at 153 to 178 shows a compositional bias: basic and acidic residues; that stretch reads RSKDKDKDKDRDRKKDKNGHHDSGDH. A compositionally biased stretch (basic residues) spans 179–188; that stretch reads SKKHHDKKRK.

This sequence belongs to the plant Mediator complex subunit 19 family. Component of the Mediator complex. Interacts with FIB2.

It localises to the nucleus. Functionally, component of the Mediator complex, a coactivator involved in the regulated transcription of nearly all RNA polymerase II-dependent genes. Mediator functions as a bridge to convey information from gene-specific regulatory proteins to the basal RNA polymerase II transcription machinery. The Mediator complex, having a compact conformation in its free form, is recruited to promoters by direct interactions with regulatory proteins and serves for the assembly of a functional preinitiation complex with RNA polymerase II and the general transcription factors. The protein is Mediator of RNA polymerase II transcription subunit 19a (MED19A) of Arabidopsis thaliana (Mouse-ear cress).